Here is a 163-residue protein sequence, read N- to C-terminus: Nucleotide-binding protein tll0793 (163 aa).

The protein belongs to the YajQ family.

Functionally, nucleotide-binding protein. The sequence is that of Nucleotide-binding protein tll0793 from Thermosynechococcus vestitus (strain NIES-2133 / IAM M-273 / BP-1).